A 384-amino-acid chain; its full sequence is GDSL esterase/lipase ENOD8 (384 aa).

An N-terminal signal peptide occupies residues 1-31 (MKFMAKIELSRHIPLVTLIVLVLCITPPIFA). The active-site Nucleophile is the Ser46. N-linked (GlcNAc...) asparagine glycosylation is found at Asn105, Asn191, Asn198, Asn276, and Asn330. Catalysis depends on residues Asp349 and His352.

The protein belongs to the 'GDSL' lipolytic enzyme family. Expressed in root nodules (at protein level).

It localises to the symbiosome. Has lipase and esterase activities. Probably involved in root nodule physiology. In Medicago truncatula (Barrel medic), this protein is GDSL esterase/lipase ENOD8.